A 468-amino-acid polypeptide reads, in one-letter code: Nuclear distribution protein PAC1-2 (468 aa).

The LisH domain occupies 13 to 45 (QAEELHKSIIAYLTSLNLATTANTLRAELNLPE). A coiled-coil region spans residues 66–92 (SVIRLQKKVLDLQAENAHLKNEIENAG). WD repeat units lie at residues 118–159 (GHRL…RTLK), 161–201 (HTKA…KNIR), 205–251 (GHDH…CVKT), 254–293 (GHND…PECR), 298–358 (GHEN…IKVL), 360–399 (GHDN…KCVQ), 404–429 (MFDG…GDAG), and 430–468 (DGTP…IFAN).

The protein belongs to the WD repeat LIS1/nudF family. In terms of assembly, self-associates. Interacts with NDL1 and dynein.

The protein localises to the cytoplasm. It is found in the cytoskeleton. The protein resides in the spindle pole. Positively regulates the activity of the minus-end directed microtubule motor protein dynein. May enhance dynein-mediated microtubule sliding by targeting dynein to the microtubule plus end. Required for nuclear migration during vegetative growth as well as development. Required for retrograde early endosome (EE) transport from the hyphal tip. Required for localization of dynein to the mitotic spindle poles. Recruits additional proteins to the dynein complex at SPBs. The protein is Nuclear distribution protein PAC1-2 of Podospora anserina (strain S / ATCC MYA-4624 / DSM 980 / FGSC 10383) (Pleurage anserina).